We begin with the raw amino-acid sequence, 436 residues long: Methylenetetrahydrofolate--tRNA-(uracil-5-)-methyltransferase TrmFO (436 aa).

Residue 11–16 (GAGLAG) coordinates FAD.

Belongs to the MnmG family. TrmFO subfamily. FAD is required as a cofactor.

Its subcellular location is the cytoplasm. The catalysed reaction is uridine(54) in tRNA + (6R)-5,10-methylene-5,6,7,8-tetrahydrofolate + NADH + H(+) = 5-methyluridine(54) in tRNA + (6S)-5,6,7,8-tetrahydrofolate + NAD(+). It carries out the reaction uridine(54) in tRNA + (6R)-5,10-methylene-5,6,7,8-tetrahydrofolate + NADPH + H(+) = 5-methyluridine(54) in tRNA + (6S)-5,6,7,8-tetrahydrofolate + NADP(+). Catalyzes the folate-dependent formation of 5-methyl-uridine at position 54 (M-5-U54) in all tRNAs. The chain is Methylenetetrahydrofolate--tRNA-(uracil-5-)-methyltransferase TrmFO from Shouchella clausii (strain KSM-K16) (Alkalihalobacillus clausii).